A 218-amino-acid chain; its full sequence is Autophagy-related protein 101 (218 aa).

The important for interaction with ATG13 stretch occupies residues 152–156; that stretch reads IINIV.

Belongs to the ATG101 family. As to quaternary structure, interacts with ATG13. Associates with a complex composed of ATG13, ULK1 and RB1CC1; the association with this complex requires the presence of ATG13.

Its subcellular location is the cytoplasm. The protein localises to the preautophagosomal structure. In terms of biological role, autophagy factor required for autophagosome formation. Stabilizes ATG13, protecting it from proteasomal degradation. The chain is Autophagy-related protein 101 (ATG101) from Homo sapiens (Human).